A 185-amino-acid polypeptide reads, in one-letter code: Elongation factor P (185 aa).

The protein belongs to the elongation factor P family.

It is found in the cytoplasm. The protein operates within protein biosynthesis; polypeptide chain elongation. Functionally, involved in peptide bond synthesis. Stimulates efficient translation and peptide-bond synthesis on native or reconstituted 70S ribosomes in vitro. Probably functions indirectly by altering the affinity of the ribosome for aminoacyl-tRNA, thus increasing their reactivity as acceptors for peptidyl transferase. The chain is Elongation factor P from Agathobacter rectalis (strain ATCC 33656 / DSM 3377 / JCM 17463 / KCTC 5835 / VPI 0990) (Eubacterium rectale).